The following is a 332-amino-acid chain: Homoserine kinase (332 aa).

The protein belongs to the pseudomonas-type ThrB family.

It carries out the reaction L-homoserine + ATP = O-phospho-L-homoserine + ADP + H(+). The protein operates within amino-acid biosynthesis; L-threonine biosynthesis; L-threonine from L-aspartate: step 4/5. This Burkholderia multivorans (strain ATCC 17616 / 249) protein is Homoserine kinase.